Consider the following 245-residue polypeptide: ATP synthase subunit a (245 aa).

The next 7 helical transmembrane spans lie at 5–25 (LWFT…MMSV), 37–57 (ISNY…FFIA), 99–119 (YIVT…IPGF), 125–145 (FPSV…VHGL), 157–177 (FLGP…CSHF), 187–209 (LYAN…PLGF), and 221–241 (SLIQ…EATA).

It belongs to the ATPase A chain family. As to quaternary structure, F-type ATPases have 2 components, CF(1) - the catalytic core - and CF(0) - the membrane proton channel. CF(1) has five subunits: alpha(3), beta(3), gamma(1), delta(1), epsilon(1). CF(0) has three main subunits: a(1), b(2) and c(9-12). The alpha and beta chains form an alternating ring which encloses part of the gamma chain. CF(1) is attached to CF(0) by a central stalk formed by the gamma and epsilon chains, while a peripheral stalk is formed by the delta and b chains.

Its subcellular location is the cell inner membrane. Its function is as follows. Key component of the proton channel; it plays a direct role in the translocation of protons across the membrane. In Koribacter versatilis (strain Ellin345), this protein is ATP synthase subunit a.